The sequence spans 468 residues: UDP-N-acetylmuramate--L-alanine ligase (468 aa).

ATP is bound at residue 114 to 120; the sequence is GTHGKTT.

The protein belongs to the MurCDEF family.

The protein localises to the cytoplasm. The enzyme catalyses UDP-N-acetyl-alpha-D-muramate + L-alanine + ATP = UDP-N-acetyl-alpha-D-muramoyl-L-alanine + ADP + phosphate + H(+). It participates in cell wall biogenesis; peptidoglycan biosynthesis. Functionally, cell wall formation. The chain is UDP-N-acetylmuramate--L-alanine ligase from Methylorubrum populi (strain ATCC BAA-705 / NCIMB 13946 / BJ001) (Methylobacterium populi).